A 219-amino-acid chain; its full sequence is ATP phosphoribosyltransferase (219 aa).

It belongs to the ATP phosphoribosyltransferase family. Short subfamily. As to quaternary structure, heteromultimer composed of HisG and HisZ subunits.

The protein resides in the cytoplasm. It carries out the reaction 1-(5-phospho-beta-D-ribosyl)-ATP + diphosphate = 5-phospho-alpha-D-ribose 1-diphosphate + ATP. It participates in amino-acid biosynthesis; L-histidine biosynthesis; L-histidine from 5-phospho-alpha-D-ribose 1-diphosphate: step 1/9. Functionally, catalyzes the condensation of ATP and 5-phosphoribose 1-diphosphate to form N'-(5'-phosphoribosyl)-ATP (PR-ATP). Has a crucial role in the pathway because the rate of histidine biosynthesis seems to be controlled primarily by regulation of HisG enzymatic activity. The polypeptide is ATP phosphoribosyltransferase (Syntrophotalea carbinolica (strain DSM 2380 / NBRC 103641 / GraBd1) (Pelobacter carbinolicus)).